The following is a 436-amino-acid chain: Glutamyl-tRNA reductase (436 aa).

Residues 49 to 52 (TCNR), Ser-109, 114 to 116 (EGQ), and Gln-120 each bind substrate. Catalysis depends on Cys-50, which acts as the Nucleophile. 198-203 (GAGRMS) contacts NADP(+).

Belongs to the glutamyl-tRNA reductase family. In terms of assembly, homodimer.

The enzyme catalyses (S)-4-amino-5-oxopentanoate + tRNA(Glu) + NADP(+) = L-glutamyl-tRNA(Glu) + NADPH + H(+). Its pathway is porphyrin-containing compound metabolism; protoporphyrin-IX biosynthesis; 5-aminolevulinate from L-glutamyl-tRNA(Glu): step 1/2. It participates in porphyrin-containing compound metabolism; chlorophyll biosynthesis. In terms of biological role, catalyzes the NADPH-dependent reduction of glutamyl-tRNA(Glu) to glutamate 1-semialdehyde (GSA). This is Glutamyl-tRNA reductase from Prochlorococcus marinus (strain MIT 9313).